A 1850-amino-acid chain; its full sequence is Serine/threonine-protein kinase WNK (1850 aa).

Disordered stretches follow at residues Met-1–Glu-108, Gln-221–Lys-253, and Met-272–Ala-309. 2 stretches are compositionally biased toward low complexity: residues Ser-16–Thr-26 and Pro-234–Asn-251. Basic and acidic residues predominate over residues Asp-284–Ala-309. Residues Leu-334–Phe-596 enclose the Protein kinase domain. ATP is bound by residues Ser-344, Thr-416–Met-419, and Lys-466. Asp-483 acts as the Proton acceptor in catalysis. Residues Asp-693 to Asn-749 adopt a coiled-coil conformation. A compositionally biased stretch (basic and acidic residues) spans Glu-727–Ala-742. 7 disordered regions span residues Glu-727 to Pro-790, Thr-890 to Ser-943, Glu-1040 to Pro-1130, Ser-1188 to Ile-1249, Gly-1588 to Ser-1636, Ala-1721 to Gly-1740, and Ile-1769 to Val-1850. The segment covering Asn-751 to Ala-760 has biased composition (pro residues). Over residues Ser-776–Pro-790 the composition is skewed to polar residues. The segment covering Thr-890 to Thr-934 has biased composition (low complexity). The segment covering Pro-1062–Pro-1071 has biased composition (basic and acidic residues). Over residues Gln-1077–Ser-1101 the composition is skewed to polar residues. The span at Ser-1188–Asn-1207 shows a compositional bias: low complexity. Over residues Met-1208–Val-1217 the composition is skewed to polar residues. Over residues Pro-1771–Ser-1805 the composition is skewed to low complexity. Residues Tyr-1806–Ala-1820 show a composition bias toward polar residues. The span at Ser-1821–Ser-1832 shows a compositional bias: low complexity.

This sequence belongs to the protein kinase superfamily. Ser/Thr protein kinase family. WNK subfamily. As to quaternary structure, interacts with gck-3 (via C-terminus). It depends on Mg(2+) as a cofactor. As to expression, expressed in pharynx, nervous system, hypodermis, spermatheca, excretory cell and canal and body wall muscles.

Its subcellular location is the cytoplasm. The enzyme catalyses L-seryl-[protein] + ATP = O-phospho-L-seryl-[protein] + ADP + H(+). The catalysed reaction is L-threonyl-[protein] + ATP = O-phospho-L-threonyl-[protein] + ADP + H(+). With respect to regulation, activated in response to hyperosmotic stress: cell shrinkage promotes formation of a membraneless compartment that concentrates wnk-1 with its downstrem substrates. In terms of biological role, serine/threonine-protein kinase component of the WNK3-SPAK/OSR1 kinase cascade, which plays an important role in the regulation of electrolyte homeostasis and regulatory volume increase in response to hyperosmotic stress. Wnk-1 mediates regulatory volume increase in response to hyperosmotic stress by acting as a molecular crowding sensor, which senses cell shrinkage and mediates formation of a membraneless compartment by undergoing liquid-liquid phase separation. The membraneless compartment concentrates wnk-1 with its substrates. Phosphorylates gck-3. Plays a role in osmotic stress responses during which it increases gpdh-1 translation, likely by phosphorylating gck-3. Essential for larval development and the tubular formation of the excretory canals. This Caenorhabditis elegans protein is Serine/threonine-protein kinase WNK.